A 548-amino-acid polypeptide reads, in one-letter code: uncharacterized protein (548 aa).

2 positions are modified to phosphoserine: S19 and S25. Position 47 is a phosphothreonine (T47).

This is an uncharacterized protein from Schizosaccharomyces pombe (strain 972 / ATCC 24843) (Fission yeast).